The sequence spans 1372 residues: DNA-directed RNA polymerase subunit beta (1372 aa).

It belongs to the RNA polymerase beta chain family. The RNAP catalytic core consists of 2 alpha, 1 beta, 1 beta' and 1 omega subunit. When a sigma factor is associated with the core the holoenzyme is formed, which can initiate transcription.

It carries out the reaction RNA(n) + a ribonucleoside 5'-triphosphate = RNA(n+1) + diphosphate. DNA-dependent RNA polymerase catalyzes the transcription of DNA into RNA using the four ribonucleoside triphosphates as substrates. The chain is DNA-directed RNA polymerase subunit beta from Bradyrhizobium sp. (strain ORS 278).